Here is a 366-residue protein sequence, read N- to C-terminus: Protein BIG GRAIN 1-like B (366 aa).

2 disordered regions span residues 42 to 73 (DSSTNSSSMRKTKHQNREDTRVSANRRDDFNR) and 129 to 148 (FERSPQNHRPNSSNKQEHGS). Positions 56 to 73 (QNREDTRVSANRRDDFNR) are enriched in basic and acidic residues.

This sequence belongs to the BIG GRAIN 1 (BG1) plant protein family.

The protein resides in the cell membrane. Its function is as follows. Involved in auxin transport. Regulator of the auxin signaling pathway. This chain is Protein BIG GRAIN 1-like B, found in Arabidopsis thaliana (Mouse-ear cress).